We begin with the raw amino-acid sequence, 182 residues long: MLIGLTGTPGTGKTSVSKFLERKRHWKVIHLNEMIKEEHLYTEVDEVRDAVIADMELVRQRLEEIIGGKENEVIILESHLAHYIADIVIILRVYPPELKMRLKARGYSEEKIRENIEAEALDVILVEAFEWCKKVFEINTTGKSIEETEQHIEKIIDHILSGNEEELPEYKPGSIDWIDLVP.

ATP is bound by residues G10, G12, K13, T14, and S15. Residues 30-53 form an NMP region; that stretch reads HLNEMIKEEHLYTEVDEVRDAVIA. The interval 104 to 114 is LID; that stretch reads ARGYSEEKIRE. Residues R105 and K143 each contribute to the ATP site.

The protein belongs to the adenylate kinase family. AK6 subfamily. As to quaternary structure, interacts with uS11. Not a structural component of 40S pre-ribosomes, but transiently interacts with them by binding to uS11.

It carries out the reaction AMP + ATP = 2 ADP. It catalyses the reaction ATP + H2O = ADP + phosphate + H(+). Functionally, broad-specificity nucleoside monophosphate (NMP) kinase that catalyzes the reversible transfer of the terminal phosphate group between nucleoside triphosphates and monophosphates. Also has ATPase activity. Involved in the late maturation steps of the 30S ribosomal particles, specifically 16S rRNA maturation. While NMP activity is not required for ribosome maturation, ATPase activity is. Associates transiently with small ribosomal subunit protein uS11. ATP hydrolysis breaks the interaction with uS11. May temporarily remove uS11 from the ribosome to enable a conformational change of the ribosomal RNA that is needed for the final maturation step of the small ribosomal subunit. The polypeptide is Putative adenylate kinase (Methanosarcina barkeri (strain Fusaro / DSM 804)).